The primary structure comprises 946 residues: DNA primase (946 aa).

Residues 596–626 (RDTEEDEDGKENKNNVPDNGVFQKTTSSVDT) form a disordered region. The span at 617-626 (FQKTTSSVDT) shows a compositional bias: polar residues. The CHC2-type zinc finger occupies 881–920 (CLNYTHRNPQETVQVFIDLRTEHSYALWASLWSRCFTKKC).

This sequence belongs to the herpesviridae DNA primase family. As to quaternary structure, associates with the helicase and the primase-associated factor to form the helicase-primase factor. Interacts with host SNAPIN.

It localises to the host nucleus. Functionally, essential component of the helicase/primase complex. Unwinds the DNA at the replication forks and generates single-stranded DNA for both leading and lagging strand synthesis. The primase initiates primer synthesis and thereby produces large amount of short RNA primers on the lagging strand that the polymerase elongates using dNTPs. This is DNA primase (UL70) from Homo sapiens (Human).